A 457-amino-acid chain; its full sequence is Elongation factor 1-alpha (457 aa).

At Gly-2 the chain carries N,N,N-trimethylglycine. Lys-3 carries the N6,N6-dimethyllysine; alternate modification. Position 3 is an N6-methyllysine; alternate (Lys-3). The region spanning 5 to 240 is the tr-type G domain; sequence KTHVNVVVIG…DAIEPPVRPS (236 aa). A G1 region spans residues 14-21; that stretch reads GHVDSGKS. 14-21 serves as a coordination point for GTP; the sequence is GHVDSGKS. Lys-30 is subject to N6-methyllysine. The interval 70 to 74 is G2; sequence GITID. N6,N6,N6-trimethyllysine is present on Lys-79. The interval 91-94 is G3; that stretch reads DAPG. GTP contacts are provided by residues 91–95 and 153–156; these read DAPGH and NKMD. Residues 153–156 are G4; it reads NKMD. Residues 192 to 194 are G5; that stretch reads SGW. Lys-316 bears the N6,N6-dimethyllysine; alternate mark. N6-methyllysine; alternate is present on Lys-316. Lys-389 carries the N6-methyllysine modification.

This sequence belongs to the TRAFAC class translation factor GTPase superfamily. Classic translation factor GTPase family. EF-Tu/EF-1A subfamily.

The protein resides in the cytoplasm. This protein promotes the GTP-dependent binding of aminoacyl-tRNA to the A-site of ribosomes during protein biosynthesis. The chain is Elongation factor 1-alpha (TEF-3) from Mucor circinelloides f. lusitanicus (Mucor racemosus var. lusitanicus).